The chain runs to 751 residues: Photosystem I P700 chlorophyll a apoprotein A1 (751 aa).

8 helical membrane passes run 73-96 (VFSA…FHGA), 159-182 (LYTT…FHYH), 198-222 (LNHH…HVSL), 294-312 (TAHH…GHMY), 349-372 (WHAQ…HHMY), 388-414 (LSLF…IFMV), 436-458 (AIIS…LYIH), and 533-551 (FLVH…LILL). [4Fe-4S] cluster contacts are provided by Cys-575 and Cys-584. 2 consecutive transmembrane segments (helical) span residues 591-612 (HVFL…HFSW) and 665-687 (LSAY…MFLF). Residue His-676 participates in chlorophyll a' binding. Residues Met-684 and Tyr-692 each coordinate chlorophyll a. Trp-693 provides a ligand contact to phylloquinone. A helical transmembrane segment spans residues 725-745 (AVGVAHYLLGGIATTWSFFLA).

It belongs to the PsaA/PsaB family. As to quaternary structure, the PsaA/B heterodimer binds the P700 chlorophyll special pair and subsequent electron acceptors. PSI consists of a core antenna complex that captures photons, and an electron transfer chain that converts photonic excitation into a charge separation. The eukaryotic PSI reaction center is composed of at least 11 subunits. It depends on P700 is a chlorophyll a/chlorophyll a' dimer, A0 is one or more chlorophyll a, A1 is one or both phylloquinones and FX is a shared 4Fe-4S iron-sulfur center. as a cofactor.

Its subcellular location is the plastid. The protein localises to the chloroplast thylakoid membrane. The enzyme catalyses reduced [plastocyanin] + hnu + oxidized [2Fe-2S]-[ferredoxin] = oxidized [plastocyanin] + reduced [2Fe-2S]-[ferredoxin]. Functionally, psaA and PsaB bind P700, the primary electron donor of photosystem I (PSI), as well as the electron acceptors A0, A1 and FX. PSI is a plastocyanin/cytochrome c6-ferredoxin oxidoreductase, converting photonic excitation into a charge separation, which transfers an electron from the donor P700 chlorophyll pair to the spectroscopically characterized acceptors A0, A1, FX, FA and FB in turn. Oxidized P700 is reduced on the lumenal side of the thylakoid membrane by plastocyanin or cytochrome c6. This Tetradesmus obliquus (Green alga) protein is Photosystem I P700 chlorophyll a apoprotein A1.